We begin with the raw amino-acid sequence, 129 residues long: Ig lambda-1 chain V regions MOPC 104E/RPC20/J558/S104 (129 aa).

The first 19 residues, 1-19, serve as a signal peptide directing secretion; the sequence is MAWISLILSLLALSSGAIS. A Pyrrolidone carboxylic acid modification is found at glutamine 20. One can recognise an Ig-like domain in the interval 20-125; sequence QAVVTQESAL…HWVFGGGTKL (106 aa).

The polypeptide is Ig lambda-1 chain V regions MOPC 104E/RPC20/J558/S104 (Mus musculus (Mouse)).